The chain runs to 184 residues: ATP synthase subunit b, chloroplastic (184 aa).

Residues 27–49 (LATNLINLSVVIGVLIFFGKGVL) form a helical membrane-spanning segment.

Belongs to the ATPase B chain family. In terms of assembly, F-type ATPases have 2 components, F(1) - the catalytic core - and F(0) - the membrane proton channel. F(1) has five subunits: alpha(3), beta(3), gamma(1), delta(1), epsilon(1). F(0) has four main subunits: a(1), b(1), b'(1) and c(10-14). The alpha and beta chains form an alternating ring which encloses part of the gamma chain. F(1) is attached to F(0) by a central stalk formed by the gamma and epsilon chains, while a peripheral stalk is formed by the delta, b and b' chains.

Its subcellular location is the plastid. The protein resides in the chloroplast thylakoid membrane. In terms of biological role, f(1)F(0) ATP synthase produces ATP from ADP in the presence of a proton or sodium gradient. F-type ATPases consist of two structural domains, F(1) containing the extramembraneous catalytic core and F(0) containing the membrane proton channel, linked together by a central stalk and a peripheral stalk. During catalysis, ATP synthesis in the catalytic domain of F(1) is coupled via a rotary mechanism of the central stalk subunits to proton translocation. Functionally, component of the F(0) channel, it forms part of the peripheral stalk, linking F(1) to F(0). The polypeptide is ATP synthase subunit b, chloroplastic (Jasminum nudiflorum (Winter jasmine)).